Consider the following 339-residue polypeptide: Agamous-like MADS-box protein AGL86 (339 aa).

One can recognise an MADS-box domain in the interval 1 to 60; sequence MRSKIKLSLIANKTSRRTTFRKRKGGITNKLHELTTLCGVKACAVISSPYENPVVWPSTE. Residues 86-112 adopt a coiled-coil conformation; it reads TYLQDKITKETKKLESLRRENRESQLR.

Interacts with AGL61/DIANA and AGL62.

It localises to the nucleus. In terms of biological role, probable transcription factor. This chain is Agamous-like MADS-box protein AGL86 (AGL86), found in Arabidopsis thaliana (Mouse-ear cress).